A 489-amino-acid polypeptide reads, in one-letter code: 5-hydroxytryptamine receptor 3A (489 aa).

The signal sequence occupies residues 1 to 23; it reads MRLCIPQVLLALFLSMLTAPGEG. The Extracellular segment spans residues 24–246; that stretch reads SRRRATQARD…MKFYVIIRRR (223 aa). N-linked (GlcNAc...) asparagine glycans are attached at residues Asn109, Asn175, and Asn191. A disulfide bond links Cys162 and Cys176. A helical membrane pass occupies residues 247–273; sequence PLFYAVSLLLPSIFLMVVDIVGFCLPP. Over 274 to 278 the chain is Cytoplasmic; that stretch reads DSGER. Residues 279–297 traverse the membrane as a helical segment; sequence VSFKITLLLGYSVFLIIVS. Over 298 to 307 the chain is Extracellular; the sequence is DTLPATAIGT. Residues 308–326 traverse the membrane as a helical segment; sequence PLIGVYFVVCMALLVISLA. Residues 327–466 lie on the Cytoplasmic side of the membrane; sequence ETIFIVRLVH…GYVLDRLLFR (140 aa). The interval 425–461 is HA-stretch; determines single-channel conductance in 5-HT3 receptors; sequence AVRGLLQELSSIRHFLEKRDEMREVARDWLRVGYVLD. The helical transmembrane segment at 467–486 threads the bilayer; sequence IYLLAVLAYSITLVTLWSIW. Over 487–489 the chain is Extracellular; that stretch reads HYS.

It belongs to the ligand-gated ion channel (TC 1.A.9) family. 5-hydroxytryptamine receptor (TC 1.A.9.2) subfamily. HTR3A sub-subfamily. In terms of assembly, forms homopentameric as well as heteropentameric serotonin-activated cation-selective channel complexes with HTR3B or HTR3C or HTR3D or HTR3E. The homomeric complex is functional but exhibits low conductance with modified voltage dependence, and decreased agonist and antagonist affinity. Heteropentameric complexes display properties which resemble that of neuronal serotonin-activated channels in vivo. Interacts with RIC3. In terms of tissue distribution, brain, spinal cord, and heart.

Its subcellular location is the postsynaptic cell membrane. It is found in the cell membrane. It catalyses the reaction Na(+)(in) = Na(+)(out). It carries out the reaction K(+)(in) = K(+)(out). The catalysed reaction is Ca(2+)(in) = Ca(2+)(out). The enzyme catalyses Mg(2+)(in) = Mg(2+)(out). Forms serotonin (5-hydroxytryptamine/5-HT3)-activated cation-selective channel complexes, which when activated cause fast, depolarizing responses in neurons. In Mus musculus (Mouse), this protein is 5-hydroxytryptamine receptor 3A.